We begin with the raw amino-acid sequence, 1554 residues long: Protein TALPID3 (1554 aa).

The span at 57–68 (EHVHSADERRTE) shows a compositional bias: basic and acidic residues. Disordered stretches follow at residues 57–84 (EHVHSADERRTEIPPVNLPTASDTAGPE), 227–247 (AAEGSVPPGRTARTDSSSAGR), 312–396 (SIRL…SPER), 411–466 (TADN…TTVQ), and 489–523 (ADAFPVPNAKSTQSSRSRHLAPVATAPPPATAPIS). The stretch at 204–270 (LMKAQSEMEA…QRLQHLETIQ (67 aa)) forms a coiled coil. 4 stretches are compositionally biased toward polar residues: residues 312-321 (SIRLSATDNP), 360-391 (HWTSSTSTNRPPKSSFKNQGNGRLQDQSPNNR), 412-447 (ADNSQPEQSRESQMPSKASVTRSAQEDGSSFVNGQN), and 454-466 (EPTNVSSSSTTVQ). The segment covering 513–523 (TAPPPATAPIS) has biased composition (pro residues). The segment at 553 to 639 (SMFEDAGLVL…SSERIVDAAV (87 aa)) is required for centrosomal localization. A coiled-coil region spans residues 556-586 (EDAGLVLRQVRQSKKTLEENLEAILRAKDGE). A compositionally biased stretch (basic and acidic residues) spans 639 to 650 (VSRREAGQRTRA). Disordered stretches follow at residues 639 to 687 (VSRR…AVKQ), 1079 to 1178 (GTPA…EPGS), 1214 to 1265 (QEES…SVTV), 1354 to 1374 (QSQQPEGWWEEESSGEVSEGQ), and 1500 to 1554 (KGED…NDVF). Residues 1080 to 1089 (TPATLVQTQD) are compositionally biased toward polar residues. 2 stretches are compositionally biased toward pro residues: residues 1099-1115 (TPAPTPEPSLKDPPSPV) and 1230-1239 (QSPPAPPLPP). Residues 1240-1265 (VIQKSESSSSSSSSSSESSCSSSVTV) show a composition bias toward low complexity. Over residues 1535 to 1554 (ESVSLSSVEGDTDSSANDVF) the composition is skewed to polar residues.

The protein belongs to the TALPID3 family.

Its subcellular location is the cytoplasm. It localises to the cytoskeleton. The protein resides in the cilium basal body. It is found in the microtubule organizing center. The protein localises to the centrosome. Its subcellular location is the centriole. In terms of biological role, required for ciliogenesis and sonic hedgehog/SHH signaling. The protein is Protein TALPID3 (talpid3) of Danio rerio (Zebrafish).